The primary structure comprises 105 residues: Large ribosomal subunit protein uL24 (105 aa).

This sequence belongs to the universal ribosomal protein uL24 family. As to quaternary structure, part of the 50S ribosomal subunit.

Its function is as follows. One of two assembly initiator proteins, it binds directly to the 5'-end of the 23S rRNA, where it nucleates assembly of the 50S subunit. Functionally, one of the proteins that surrounds the polypeptide exit tunnel on the outside of the subunit. This is Large ribosomal subunit protein uL24 from Nitrosococcus oceani (strain ATCC 19707 / BCRC 17464 / JCM 30415 / NCIMB 11848 / C-107).